A 168-amino-acid polypeptide reads, in one-letter code: ADP-ribosylation factor-like protein 2-binding protein (168 aa).

It belongs to the ARL2BP family.

It is found in the cytoplasm. The protein localises to the mitochondrion intermembrane space. Its subcellular location is the cytoskeleton. The protein resides in the microtubule organizing center. It localises to the centrosome. It is found in the nucleus. The protein localises to the spindle. Its subcellular location is the cilium basal body. In terms of biological role, plays a role as an effector of the ADP-ribosylation factor-like protein 2, ARL2. The polypeptide is ADP-ribosylation factor-like protein 2-binding protein (arl2bp) (Danio rerio (Zebrafish)).